Here is a 969-residue protein sequence, read N- to C-terminus: Levansucrase (969 aa).

The signal sequence occupies residues 1-52 (MDITVNSQSNTVAPKQAECKKMRYSIRKVATVGATSALVGTLAFLGATQVKA). A compositionally biased stretch (low complexity) spans 89-103 (SEAVESSVAHSEVAT). The tract at residues 89–169 (SEAVESSVAH…STASSEAADT (81 aa)) is disordered. The segment covering 106-116 (VTETQPSNTTP) has biased composition (polar residues). The span at 124–166 (SSTVVTSSSDATTPSATVAAVSAPAHTSEAAVEAPTSTASSEA) shows a compositional bias: low complexity. The sucrose site is built by tryptophan 286, aspartate 287, and serine 356. Aspartate 287 serves as the catalytic Nucleophile. Aspartate 443 is a binding site for Ca(2+). Residues arginine 448 and aspartate 449 each coordinate sucrose. Ca(2+)-binding residues include glutamine 473, asparagine 512, and aspartate 544. Glutamate 545 is a sucrose binding site. The active-site Proton donor/acceptor is the glutamate 547. Arginine 565 is a binding site for sucrose. 2 disordered regions span residues 746-843 (VKDG…VGDR) and 860-934 (IVAT…SEGS). A compositionally biased stretch (basic and acidic residues) spans 747-758 (KDGKDKKADKPE). Positions 776 to 789 (KPGTSKPADNNQPS) are enriched in polar residues. Over residues 872 to 910 (VKEESVTETEAPKPVKSEEKVQSHGVDKANEVTKSDESS) the composition is skewed to basic and acidic residues. A compositionally biased stretch (polar residues) spans 924–934 (TPKTPSDSEGS). A helical membrane pass occupies residues 938-958 (ILSILATIFAAIASLALLGYG).

The protein belongs to the glycosyl hydrolase 68 family.

The protein resides in the cell membrane. The protein localises to the cell surface. It carries out the reaction [6)-beta-D-fructofuranosyl-(2-&gt;](n) alpha-D-glucopyranoside + sucrose = [6)-beta-D-fructofuranosyl-(2-&gt;](n+1) alpha-D-glucopyranoside + D-glucose. Ca(2+) may play an important structural role and promote stability of levansucrase. Its function is as follows. Catalyzes the synthesis of levan, a fructose polymer, by transferring the fructosyl moiety from sucrose to a growing acceptor molecule. Also displays sucrose hydrolase activity. This is Levansucrase from Streptococcus salivarius.